Consider the following 158-residue polypeptide: PTS system fructose-specific EIIB component (158 aa).

A PTS EIIB type-2 domain is found at methionine 1 to glutamate 98. Cysteine 9 functions as the Phosphocysteine intermediate in the catalytic mechanism. Cysteine 9 bears the Phosphocysteine; by EIIA mark. The tract at residues lysine 104–lysine 147 is disordered. Over residues aspartate 114–aspartate 136 the composition is skewed to acidic residues. A compositionally biased stretch (basic and acidic residues) spans glutamate 137–lysine 147.

Its subcellular location is the cytoplasm. It carries out the reaction D-fructose(out) + N(pros)-phospho-L-histidyl-[protein] = D-fructose 1-phosphate(in) + L-histidyl-[protein]. In terms of biological role, the phosphoenolpyruvate-dependent sugar phosphotransferase system (sugar PTS), a major carbohydrate active transport system, catalyzes the phosphorylation of incoming sugar substrates concomitantly with their translocation across the cell membrane. The enzyme II PtfABC PTS system is involved in fructose transport. In Haloferax volcanii (strain ATCC 29605 / DSM 3757 / JCM 8879 / NBRC 14742 / NCIMB 2012 / VKM B-1768 / DS2) (Halobacterium volcanii), this protein is PTS system fructose-specific EIIB component.